Reading from the N-terminus, the 358-residue chain is Peptide chain release factor 1 (358 aa).

An N5-methylglutamine modification is found at Gln237.

It belongs to the prokaryotic/mitochondrial release factor family. Post-translationally, methylated by PrmC. Methylation increases the termination efficiency of RF1.

It is found in the cytoplasm. Its function is as follows. Peptide chain release factor 1 directs the termination of translation in response to the peptide chain termination codons UAG and UAA. The sequence is that of Peptide chain release factor 1 from Mycoplasma mobile (strain ATCC 43663 / 163K / NCTC 11711) (Mesomycoplasma mobile).